We begin with the raw amino-acid sequence, 334 residues long: Isocitrate/homoisocitrate dehydrogenase (334 aa).

70-72 (ATS) provides a ligand contact to NADH. Residues serine 72, arginine 85, arginine 88, arginine 98, arginine 118, tyrosine 125, lysine 171, and asparagine 173 each coordinate (2R,3S)-homoisocitrate. Asparagine 173 lines the NADH pocket. Mg(2+)-binding residues include aspartate 204, aspartate 228, and aspartate 232. Residues 261 to 265 (GSAPD) and asparagine 273 contribute to the NADH site.

The protein belongs to the isocitrate and isopropylmalate dehydrogenases family. In terms of assembly, homotetramer. Dimer of dimers. The homotetramer can transiently dissociate into homodimers. Mg(2+) serves as cofactor.

It catalyses the reaction (2R,3S)-homoisocitrate + NAD(+) = 2-oxoadipate + CO2 + NADH. It carries out the reaction D-threo-isocitrate + NAD(+) = 2-oxoglutarate + CO2 + NADH. Its pathway is amino-acid biosynthesis; L-lysine biosynthesis via AAA pathway; L-alpha-aminoadipate from 2-oxoglutarate: step 4/5. Functionally, catalyzes the NAD(+)-dependent oxidative decarboxylation of homoisocitrate to 2-oxoadipate (alpha-ketoadipate), a reaction involved in lysine biosynthesis through the alpha-aminoadipate pathway. In addition, has high activity with isocitrate, but is inactive with 3-isopropylmalate. This chain is Isocitrate/homoisocitrate dehydrogenase (hicd), found in Thermus thermophilus (strain ATCC BAA-163 / DSM 7039 / HB27).